The sequence spans 118 residues: Beta-2-microglobulin (118 aa).

The first 21 residues, 1–21, serve as a signal peptide directing secretion; that stretch reads MGSRWGIAVLGLFCFVSCLEA. The Ig-like C1-type domain occupies 26–113; sequence PKIQVYSRHP…VHEGVKKTVK (88 aa). C46 and C101 are oxidised to a cystine.

This sequence belongs to the beta-2-microglobulin family. Heterodimer of an alpha chain and a beta chain. Beta-2-microglobulin is the beta-chain of major histocompatibility complex class I molecules.

The protein localises to the secreted. Component of the class I major histocompatibility complex (MHC). Involved in the presentation of peptide antigens to the immune system. The polypeptide is Beta-2-microglobulin (B2M) (Ornithorhynchus anatinus (Duckbill platypus)).